A 381-amino-acid chain; its full sequence is Arginine biosynthesis bifunctional protein ArgJ (381 aa).

Residues T143, K165, T176, E255, N376, and T381 each contribute to the substrate site. Catalysis depends on T176, which acts as the Nucleophile.

This sequence belongs to the ArgJ family. As to quaternary structure, heterotetramer of two alpha and two beta chains.

It localises to the cytoplasm. It carries out the reaction N(2)-acetyl-L-ornithine + L-glutamate = N-acetyl-L-glutamate + L-ornithine. The catalysed reaction is L-glutamate + acetyl-CoA = N-acetyl-L-glutamate + CoA + H(+). Its pathway is amino-acid biosynthesis; L-arginine biosynthesis; L-ornithine and N-acetyl-L-glutamate from L-glutamate and N(2)-acetyl-L-ornithine (cyclic): step 1/1. It functions in the pathway amino-acid biosynthesis; L-arginine biosynthesis; N(2)-acetyl-L-ornithine from L-glutamate: step 1/4. Functionally, catalyzes two activities which are involved in the cyclic version of arginine biosynthesis: the synthesis of N-acetylglutamate from glutamate and acetyl-CoA as the acetyl donor, and of ornithine by transacetylation between N(2)-acetylornithine and glutamate. This is Arginine biosynthesis bifunctional protein ArgJ from Thermus thermophilus (strain ATCC BAA-163 / DSM 7039 / HB27).